The following is a 274-amino-acid chain: Nitrogenase iron protein (274 aa).

8-15 is an ATP binding site; it reads GKGGIGKS. [4Fe-4S] cluster is bound at residue cysteine 94. An ADP-ribosylarginine; by dinitrogenase reductase ADP-ribosyltransferase modification is found at arginine 97. Cysteine 131 lines the [4Fe-4S] cluster pocket.

Belongs to the NifH/BchL/ChlL family. Homodimer. [4Fe-4S] cluster is required as a cofactor. The reversible ADP-ribosylation of Arg-97 inactivates the nitrogenase reductase and regulates nitrogenase activity.

It carries out the reaction N2 + 8 reduced [2Fe-2S]-[ferredoxin] + 16 ATP + 16 H2O = H2 + 8 oxidized [2Fe-2S]-[ferredoxin] + 2 NH4(+) + 16 ADP + 16 phosphate + 6 H(+). Functionally, the key enzymatic reactions in nitrogen fixation are catalyzed by the nitrogenase complex, which has 2 components: the iron protein and the molybdenum-iron protein. In Chlorobium chlorochromatii (strain CaD3), this protein is Nitrogenase iron protein.